We begin with the raw amino-acid sequence, 1342 residues long: DNA-directed RNA polymerase subunit beta (1342 aa).

Belongs to the RNA polymerase beta chain family. In terms of assembly, the RNAP catalytic core consists of 2 alpha, 1 beta, 1 beta' and 1 omega subunit. When a sigma factor is associated with the core the holoenzyme is formed, which can initiate transcription.

The enzyme catalyses RNA(n) + a ribonucleoside 5'-triphosphate = RNA(n+1) + diphosphate. Its function is as follows. DNA-dependent RNA polymerase catalyzes the transcription of DNA into RNA using the four ribonucleoside triphosphates as substrates. In Sodalis glossinidius (strain morsitans), this protein is DNA-directed RNA polymerase subunit beta.